Consider the following 622-residue polypeptide: WD repeat-containing protein 48 (622 aa).

The residue at position 28 (Y28) is a Phosphotyrosine. 8 WD repeats span residues 28 to 67 (YNRNGVNALQLDPALNRLFTAGRDSIIRIWSVNQHKQDPY), 73 to 112 (HHTDWVNDIVLCCNGKTLISASSDTTVKVWNAHKGFCMST), 115 to 154 (THKDYVKALAYAKDKELVASAGLDRQIFLWDVNTLTALTA), 166 to 205 (GNKDSIYSLAMNQLGTIIVSGSTEKVLRVWDPRTCAKLMK), 208 to 247 (GHTDNVKALLLNRDGTQCLSGSSDGTIRLWSLGQQRCIAT), 250 to 289 (VHDEGVWALQVNDAFTHVYSGGRDRKIYCTDLRNPDIRVL), 292 to 334 (EEKA…NFRA), and 358 to 397 (KGGASIIQCHILNDKRHILTKDTNNNVAYWVSVKDAGFSS). Residue K214 is modified to N6-acetyllysine. An N6-acetyllysine modification is found at K523. The segment at 552–573 (LDNESQTTSSSNNEKPGEQEKE) is disordered. Over residues 554-565 (NESQTTSSSNNE) the composition is skewed to low complexity. T558 carries the phosphothreonine modification.

Belongs to the WD repeat WDR48 family. In terms of assembly, interacts with USP46. Interacts with USP1. Interacts with USP12. Component of the USP12-WDR20-WDR48 deubiquitinating complex. Component of the USP12-DMWD-WDR48 deubiquitinating complex. Interacts with PHLPP1. Interacts with RAD51AP1; the interaction is direct and promotes formation of a trimeric complex with RAD51 via RAD51AP1. Interacts with ATAD5; the interaction regulates USP1-mediated PCNA deubiquitination. Interacts with RAD51; the interaction is enhanced under replication stress. Interacts with ITCH; the interaction is more efficient when both USP12 and WDR48/UAF1 are involved and may facilitate recruitment of the USP12 deubiquitinating complex to Notch.

It is found in the nucleus. It localises to the cytoplasm. Its subcellular location is the lysosome. The protein resides in the late endosome. Its function is as follows. Regulator of deubiquitinating complexes, which acts as a strong activator of USP1, USP12 and USP46. Enhances the USP1-mediated deubiquitination of FANCD2; USP1 being almost inactive by itself. Activates deubiquitination by increasing the catalytic turnover without increasing the affinity of deubiquitinating enzymes for the substrate. Also activates deubiquitinating activity of complexes containing USP12. Docks at the distal end of the USP12 fingers domain and induces a cascade of structural changes leading to the activation of the enzyme. Together with RAD51AP1, promotes DNA repair by stimulating RAD51-mediated homologous recombination. Binds single-stranded DNA (ssDNA) and double-stranded DNA (dsDNA). DNA-binding is required both for USP1-mediated deubiquitination of FANCD2 and stimulation of RAD51-mediated homologous recombination: both WDR48/UAF1 and RAD51AP1 have coordinated role in DNA-binding during these processes. Together with ATAD5 and by regulating USP1 activity, has a role in PCNA-mediated translesion synthesis (TLS) by deubiquitinating monoubiquitinated PCNA. Together with ATAD5, has a role in recruiting RAD51 to stalled forks during replication stress. This Macaca fascicularis (Crab-eating macaque) protein is WD repeat-containing protein 48 (WDR48).